Consider the following 931-residue polypeptide: Synaptopodin (931 aa).

Disordered stretches follow at residues 56–78 (EEEG…APAI) and 113–243 (ASVS…MEGY). Ser134 bears the Phosphoserine mark. Basic and acidic residues predominate over residues 136–148 (TEKDLKEAKERSQ). Composition is skewed to polar residues over residues 153 to 164 (QLTTPPSSNSRG) and 188 to 200 (PKLS…TGHP). Ser202, Ser222, and Ser258 each carry phosphoserine. Positions 214-232 (PTSPSKPGSPKHSSSQSPS) are enriched in low complexity. Residues 280-420 (GLHLSQNRET…SSSGPPAADL (141 aa)) form a disordered region. Polar residues-rich tracts occupy residues 282–293 (HLSQNRETQQSS) and 309–370 (INQN…NTPS). Positions 373-384 (DGQRPVPAEEVR) are enriched in basic and acidic residues. 2 positions are modified to phosphoserine: Ser490 and Ser514. Disordered regions lie at residues 542-591 (RRPL…KGQV) and 691-711 (SPRI…EASG). Thr549 bears the Phosphothreonine mark. Residues 551 to 554 (PPTY) carry the PPxY motif motif. A compositionally biased stretch (polar residues) spans 556–568 (ETLSTAPVASQVR). Position 569 is a phosphoserine (Ser569). Residues 569–580 (SPPSYSTLYPSS) are compositionally biased toward low complexity. A PPxY motif motif is present at residues 570 to 573 (PPSY). Phosphoserine is present on residues Ser691, Ser742, Ser746, and Ser767. Thr771 carries the phosphothreonine modification. A disordered region spans residues 775–918 (SLYHGYLPEN…RPSFSTRNAG (144 aa)). Low complexity predominate over residues 816–841 (SSRATSSRASSRTVSPRAASPAKPSS). Ser835 is subject to Phosphoserine. Arg850 bears the Omega-N-methylarginine mark. The residue at position 856 (Ser856) is a Phosphoserine. Residues 874-895 (VQDSLQPTAVSPTYSSDISPVS) show a composition bias toward polar residues.

Belongs to the synaptopodin family. As to quaternary structure, interacts with BAIAP1. Interacts with actin. Interacts (via PPxY motifs) with WWC1 (via WW domains). In terms of processing, O-glycosylated. As to expression, expressed at high levels in brain and at moderate, but still significant levels in the heart, skeletal muscle, lung and kidney. In brain, expressed in the cerebral cortex, hippocampus, olfactory bulb and striatum.

The protein resides in the cytoplasm. The protein localises to the cytoskeleton. It is found in the cell junction. It localises to the tight junction. Its subcellular location is the perikaryon. The protein resides in the cell projection. The protein localises to the dendritic spine. It is found in the postsynaptic density. It localises to the synapse. Its subcellular location is the cytosol. Functionally, actin-associated protein that may play a role in modulating actin-based shape and motility of dendritic spines and renal podocyte foot processes. Seems to be essential for the formation of spine apparatuses in spines of telencephalic neurons, which is involved in synaptic plasticity. The polypeptide is Synaptopodin (Synpo) (Rattus norvegicus (Rat)).